We begin with the raw amino-acid sequence, 1050 residues long: Integrin alpha-5 (1050 aa).

An N-terminal signal peptide occupies residues 1–32 (MQLPRGSRVPGLVATFLFPVLCALLTFSSVRG). At 33–996 (FNLAVEQPAV…IHWAKPESSY (964 aa)) the chain is on the extracellular side. 7 FG-GAP repeats span residues 34 to 99 (NLAV…GTNC), 116 to 175 (DTPQ…NFTT), 183 to 235 (RTDF…QEAY), 249 to 301 (QTRQ…GTDL), 302 to 367 (RSLY…MEST), 368 to 426 (PHLI…GVDS), and 430 to 493 (QVLQ…ISPN). 3 N-linked (GlcNAc...) asparagine glycosylation sites follow: asparagine 75, asparagine 95, and asparagine 98. 2 disulfide bridges follow: cysteine 90-cysteine 99 and cysteine 145-cysteine 166. Asparagine 172 is a glycosylation site (N-linked (GlcNAc...) asparagine). An intrachain disulfide couples cysteine 182 to cysteine 195. Ca(2+) contacts are provided by glutamate 270, serine 272, aspartate 274, threonine 276, and aspartate 278. N-linked (GlcNAc...) asparagine glycans are attached at residues asparagine 287, asparagine 297, and asparagine 306. Ca(2+)-binding residues include aspartate 324, asparagine 326, aspartate 328, leucine 330, aspartate 332, aspartate 390, aspartate 392, aspartate 394, aspartate 398, aspartate 454, aspartate 456, asparagine 458, tyrosine 460, and aspartate 462. A disulfide bond links cysteine 502 and cysteine 513. N-linked (GlcNAc...) asparagine glycosylation is found at asparagine 507, asparagine 515, asparagine 521, and asparagine 600. A disulfide bridge connects residues cysteine 519 and cysteine 575. Cysteines 636 and 642 form a disulfide. Residues asparagine 649, asparagine 714, asparagine 763, and asparagine 861 are each glycosylated (N-linked (GlcNAc...) asparagine). Cysteine 708 and cysteine 721 form a disulfide bridge. Intrachain disulfides connect cysteine 839–cysteine 958, cysteine 862–cysteine 922, and cysteine 910–cysteine 917. A helical membrane pass occupies residues 997–1022 (GVPLWIIILAILIGLLLLALLIYVLY). The Cytoplasmic segment spans residues 1023 to 1050 (KLGFFKRSYQYGTAMEKAELKPQAASEA). A GFFKR motif motif is present at residues 1025 to 1029 (GFFKR).

This sequence belongs to the integrin alpha chain family. In terms of assembly, heterodimer of an alpha and a beta subunit. The alpha subunit is composed of a heavy and a light chain linked by a disulfide bond. Alpha-5 associates with beta-1.

The protein resides in the cell membrane. It localises to the cell junction. Its subcellular location is the focal adhesion. Its function is as follows. Integrin alpha-5/beta-1 (ITGA5:ITGB1) is a receptor for fibronectin. It recognizes the sequence R-G-D in its ligands. ITGA5:ITGB1 acts as a receptor for fibrillin-1 (FBN1) and mediates R-G-D-dependent cell adhesion to FBN1. ITGA5:ITGB1 acts as a receptor for fibronectin (FN1) and mediates R-G-D-dependent cell adhesion to FN1. ITGA5:ITGB1 is a receptor for IL1B and binding is essential for IL1B signaling. ITGA5:ITGB3 is a receptor for soluble CD40LG and is required for CD40/CD40LG signaling. The protein is Integrin alpha-5 (itga5) of Xenopus laevis (African clawed frog).